The primary structure comprises 352 residues: C-C chemokine receptor type 5 (352 aa).

Over 1-30 (MDYQVSSPTYDIDYYTSEPCQKINVKQIAA) the chain is Extracellular. At Tyr-3 the chain carries Sulfotyrosine. O-linked (GalNAc...) serine glycosylation is found at Ser-6 and Ser-7. Sulfotyrosine occurs at positions 10, 14, and 15. Intrachain disulfides connect Cys-20–Cys-269 and Cys-101–Cys-178. Residues 31–58 (RLLPPLYSLVFIFGFVGNILVVLILINC) traverse the membrane as a helical segment. Residues 59–68 (KRLKSMTDIY) are Cytoplasmic-facing. Residues 69–89 (LLNLAISDLLFLLTVPFWAHY) form a helical membrane-spanning segment. Residues 90 to 102 (AAAQWDFGNTMCQ) lie on the Extracellular side of the membrane. Residues 103-124 (LLTGLYFIGFFSGIFFIILLTI) form a helical membrane-spanning segment. The Cytoplasmic segment spans residues 125–141 (DRYLAIVHAVFALKART). The helical transmembrane segment at 142 to 166 (VTFGVVTSVITWVVAVFASLPGIIF) threads the bilayer. At 167–198 (TRSQREGLHYTCSSHFPYSQYQFWKNFQTLKM) the chain is on the extracellular side. The chain crosses the membrane as a helical span at residues 199-218 (VILGLVLPLLVMVICYSGIL). Residues 219–235 (KTLLRCRNEKKRHRAVR) are Cytoplasmic-facing. The chain crosses the membrane as a helical span at residues 236 to 260 (LIFTIMIVYFLFWAPYNIVLLLNTF). Over 261–277 (QEFFGLNNCSSSNRLDQ) the chain is Extracellular. A helical transmembrane segment spans residues 278-301 (AMQVTETLGMTHCCINPIIYAFVG). Topologically, residues 302–352 (EKFRNYLLVFFQKHIAKRFCKCCSIFQQEAPERASSVYTRSTGEQEISVGL) are cytoplasmic. Residues Cys-321, Cys-323, and Cys-324 are each lipidated (S-palmitoyl cysteine). Ser-336, Ser-337, Ser-342, and Ser-349 each carry phosphoserine; by BARK1.

The protein belongs to the G-protein coupled receptor 1 family. Interacts with PRAF2. Efficient ligand binding to CCL3/MIP-1alpha and CCL4/MIP-1beta requires sulfation, O-glycosylation and sialic acid modifications. Glycosylation on Ser-6 is required for efficient binding of CCL4. Interacts with GRK2. Interacts with ARRB1 and ARRB2. Interacts with CNIH4. Interacts with S100A4; this interaction stimulates T-lymphocyte chemotaxis. In terms of processing, sulfated on at least 2 of the N-terminal tyrosines. Sulfation is required for efficient binding of the chemokines, CCL3 and CCL4. Post-translationally, palmitoylation in the C-terminal is important for cell surface expression. Phosphorylation on serine residues in the C-terminal is stimulated by binding CC chemokines especially by APO-RANTES. In terms of processing, O-glycosylated, but not N-glycosylated. Ser-6 appears to be the major site even if Ser-7 may be also O-glycosylated. Also sialylated glycans present which contribute to chemokine binding. Thr-16 and Ser-17 may also be glycosylated and, if so, with small moieties such as a T-antigen.

It is found in the cell membrane. Its function is as follows. Receptor for a number of inflammatory CC-chemokines including CCL3/MIP-1-alpha, CCL4/MIP-1-beta and RANTES and subsequently transduces a signal by increasing the intracellular calcium ion level. May play a role in the control of granulocytic lineage proliferation or differentiation. Participates in T-lymphocyte migration to the infection site by acting as a chemotactic receptor. This chain is C-C chemokine receptor type 5 (CCR5), found in Macaca fascicularis (Crab-eating macaque).